The following is a 490-amino-acid chain: Betaine aldehyde dehydrogenase (490 aa).

Aspartate 93 is a K(+) binding site. 150–152 (GAW) lines the NAD(+) pocket. Lysine 162 serves as the catalytic Charge relay system. Residue 176-179 (KPSE) coordinates NAD(+). A K(+)-binding site is contributed by valine 180. 230 to 233 (GIAS) is a binding site for NAD(+). Leucine 246 is a binding site for K(+). Catalysis depends on glutamate 252, which acts as the Proton acceptor. 3 residues coordinate NAD(+): glycine 254, cysteine 286, and glutamate 387. The Nucleophile role is filled by cysteine 286. Cysteine 286 is subject to Cysteine sulfenic acid (-SOH). 2 residues coordinate K(+): lysine 457 and glycine 460. Glutamate 464 serves as the catalytic Charge relay system.

It belongs to the aldehyde dehydrogenase family. As to quaternary structure, dimer of dimers. Requires K(+) as cofactor.

The catalysed reaction is betaine aldehyde + NAD(+) + H2O = glycine betaine + NADH + 2 H(+). Its pathway is amine and polyamine biosynthesis; betaine biosynthesis via choline pathway; betaine from betaine aldehyde: step 1/1. Involved in the biosynthesis of the osmoprotectant glycine betaine. Catalyzes the irreversible oxidation of betaine aldehyde to the corresponding acid. The sequence is that of Betaine aldehyde dehydrogenase from Yersinia pseudotuberculosis serotype IB (strain PB1/+).